Here is a 1380-residue protein sequence, read N- to C-terminus: DNA-directed RNA polymerase subunit beta (1380 aa).

The protein belongs to the RNA polymerase beta chain family. In terms of assembly, the RNAP catalytic core consists of 2 alpha, 1 beta, 1 beta' and 1 omega subunit. When a sigma factor is associated with the core the holoenzyme is formed, which can initiate transcription.

The catalysed reaction is RNA(n) + a ribonucleoside 5'-triphosphate = RNA(n+1) + diphosphate. Its function is as follows. DNA-dependent RNA polymerase catalyzes the transcription of DNA into RNA using the four ribonucleoside triphosphates as substrates. The chain is DNA-directed RNA polymerase subunit beta from Rhizobium meliloti (strain 1021) (Ensifer meliloti).